Reading from the N-terminus, the 169-residue chain is CKLF-like MARVEL transmembrane domain-containing protein 2A (169 aa).

4 helical membrane-spanning segments follow: residues 40–60, 69–89, 98–118, and 136–156; these read FWLSGHAVFKLLSLGCMISAL, HPVLILLICMEAAICIFFIFL, IPFVFWPMADIFNSLFSCVFL, and YLTAMILMGAAAICSFIDMLL. Residues 40 to 162 enclose the MARVEL domain; that stretch reads FWLSGHAVFK…DMLLQFQHFR (123 aa).

Belongs to the chemokine-like factor family.

The protein localises to the membrane. The protein is CKLF-like MARVEL transmembrane domain-containing protein 2A (Cmtm2a) of Mus musculus (Mouse).